The following is a 584-amino-acid chain: Leucine-rich repeat and fibronectin type III domain-containing protein 1 (584 aa).

The first 17 residues, 1-17 (MERLVFCVLVFGALAKA), serve as a signal peptide directing secretion. The 34-residue stretch at 18 to 51 (QLCPGRCICQTISPTLTLLCAKTGLLFVPPTVDR) folds into the LRRNT domain. The Extracellular portion of the chain corresponds to 18–494 (QLCPGRCICQ…VPSQFLGGTM (477 aa)). LRR repeat units lie at residues 52-73 (KTVE…DFLN), 76-97 (SLVH…AFMG), 100-121 (SLRA…QLKG), 124-145 (NLRH…SFDE), 149-170 (TIED…AIAR), 173-194 (NINT…TFTL), and 197-218 (KLVR…TLFQ). Asn-73 carries an N-linked (GlcNAc...) asparagine glycan. One can recognise an LRRCT domain in the interval 241–287 (NPLHCNCELLWLRRLTREDDLETCASPEHLMDKYFWSIQEEEFICEP). The Ig-like domain occupies 288-375 (PLITKHQVTK…GIATAAVHVH (88 aa)). An intrachain disulfide couples Cys-310 to Cys-359. N-linked (GlcNAc...) asparagine glycosylation is found at Asn-332, Asn-341, Asn-384, Asn-408, and Asn-421. Residues 393 to 414 (DPGLSDISTSSRSSSNDSKTHS) are disordered. Low complexity predominate over residues 397–409 (SDISTSSRSSSND). Residues 495-515 (IIIIGGIIVASVLVFIIILMI) traverse the membrane as a helical segment. Residues 516 to 584 (RYKAYSGGGG…MVLPILHLLF (69 aa)) are Cytoplasmic-facing. The segment at 539–564 (HVHSQTNGSRSAATKQSEEPPESPAG) is disordered. Over residues 540–553 (VHSQTNGSRSAATK) the composition is skewed to polar residues.

It belongs to the LRFN family.

It is found in the membrane. It localises to the synapse. Its function is as follows. Involved in the regulation of excitatory synapses. This is Leucine-rich repeat and fibronectin type III domain-containing protein 1 (lrfn1) from Danio rerio (Zebrafish).